The following is a 263-amino-acid chain: Isoprenyl transferase (263 aa).

Residue D38 is part of the active site. Mg(2+) is bound at residue D38. Substrate-binding positions include 39-42 (GNRR), H55, and 83-85 (STD). Residue N86 is the Proton acceptor of the active site. Substrate contacts are provided by residues F87, R89, R212, and 218-220 (RLS). E231 is a binding site for Mg(2+).

It belongs to the UPP synthase family. As to quaternary structure, homodimer. It depends on Mg(2+) as a cofactor.

Catalyzes the condensation of isopentenyl diphosphate (IPP) with allylic pyrophosphates generating different type of terpenoids. The polypeptide is Isoprenyl transferase (Thermus thermophilus (strain ATCC BAA-163 / DSM 7039 / HB27)).